A 1038-amino-acid chain; its full sequence is Protein argonaute 1D (1038 aa).

Disordered stretches follow at residues 1–58 (MGSR…GAAP) and 110–134 (APHE…PRSL). Gly residues-rich tracts occupy residues 18 to 29 (RGGGRGGGGRGR) and 43 to 52 (GHGGRGGAGY). Residues 115 to 134 (PANVSSPEAASPEASSPRSL) are compositionally biased toward low complexity. The 114-residue stretch at 380–493 (PVIDFVIQLL…LPMEVCKIVE (114 aa)) folds into the PAZ domain. Residues 669-990 (LLIGLLPDNN…AAFRARFYME (322 aa)) form the Piwi domain. Positions 992-1021 (DSSDSGSMASGRGGGSSTSRSTRAAGGGAV) are disordered.

This sequence belongs to the argonaute family. Ago subfamily.

Its function is as follows. Probably involved in the RNA silencing pathway. May bind to short RNAs such as microRNAs (miRNAs) or short interfering RNAs (siRNAs), and represses the translation of mRNAs which are complementary to them. In Oryza sativa subsp. japonica (Rice), this protein is Protein argonaute 1D (AGO1D).